The chain runs to 181 residues: Ankyrin repeat-containing protein YGL242C (181 aa).

The residue at position 1 (M1) is an N-acetylmethionine. ANK repeat units lie at residues 49 to 78 and 85 to 120; these read LGNTALHLCCKYGSWEVLDKILDQDGEIEI and DGDTPLHVTVRYSQEEPEHGTFIARNLIEVGADPRV. The segment at 151-181 is disordered; it reads IDSTNGSGDNNEDGEMIDDGPSDDDEEDDKK. Positions 160–181 are enriched in acidic residues; the sequence is NNEDGEMIDDGPSDDDEEDDKK. Position 172 is a phosphoserine (S172).

This chain is Ankyrin repeat-containing protein YGL242C, found in Saccharomyces cerevisiae (strain ATCC 204508 / S288c) (Baker's yeast).